The chain runs to 336 residues: Phosphatidylglycerol--prolipoprotein diacylglyceryl transferase (336 aa).

3 helical membrane-spanning segments follow: residues 16–36 (IGPV…VLAV), 53–73 (ILDI…IYHI), and 93–113 (IWNG…AAWA). R141 is an a 1,2-diacyl-sn-glycero-3-phospho-(1'-sn-glycerol) binding site. The next 3 membrane-spanning stretches (helical) occupy residues 190 to 210 (PTFL…VFLG), 220 to 240 (GSLF…IEAL), and 253 to 273 (INVW…IVIQ).

The protein belongs to the Lgt family.

It localises to the cell membrane. The catalysed reaction is L-cysteinyl-[prolipoprotein] + a 1,2-diacyl-sn-glycero-3-phospho-(1'-sn-glycerol) = an S-1,2-diacyl-sn-glyceryl-L-cysteinyl-[prolipoprotein] + sn-glycerol 1-phosphate + H(+). It participates in protein modification; lipoprotein biosynthesis (diacylglyceryl transfer). Catalyzes the transfer of the diacylglyceryl group from phosphatidylglycerol to the sulfhydryl group of the N-terminal cysteine of a prolipoprotein, the first step in the formation of mature lipoproteins. The polypeptide is Phosphatidylglycerol--prolipoprotein diacylglyceryl transferase (Bifidobacterium adolescentis (strain ATCC 15703 / DSM 20083 / NCTC 11814 / E194a)).